We begin with the raw amino-acid sequence, 378 residues long: Succinyl-diaminopimelate desuccinylase (378 aa).

Zn(2+) is bound at residue histidine 67. Residue aspartate 69 is part of the active site. Aspartate 100 serves as a coordination point for Zn(2+). Catalysis depends on glutamate 134, which acts as the Proton acceptor. The Zn(2+) site is built by glutamate 135, glutamate 163, and histidine 349.

The protein belongs to the peptidase M20A family. DapE subfamily. As to quaternary structure, homodimer. Zn(2+) serves as cofactor. It depends on Co(2+) as a cofactor.

The catalysed reaction is N-succinyl-(2S,6S)-2,6-diaminopimelate + H2O = (2S,6S)-2,6-diaminopimelate + succinate. Its pathway is amino-acid biosynthesis; L-lysine biosynthesis via DAP pathway; LL-2,6-diaminopimelate from (S)-tetrahydrodipicolinate (succinylase route): step 3/3. Catalyzes the hydrolysis of N-succinyl-L,L-diaminopimelic acid (SDAP), forming succinate and LL-2,6-diaminopimelate (DAP), an intermediate involved in the bacterial biosynthesis of lysine and meso-diaminopimelic acid, an essential component of bacterial cell walls. The polypeptide is Succinyl-diaminopimelate desuccinylase (Nitrosomonas eutropha (strain DSM 101675 / C91 / Nm57)).